Reading from the N-terminus, the 455-residue chain is Ribulose bisphosphate carboxylase large chain (455 aa).

K5 is modified (N6,N6,N6-trimethyllysine). Residues N114 and T164 each contribute to the substrate site. Residue K166 is the Proton acceptor of the active site. Substrate is bound at residue K168. Residues K192, D194, and E195 each contribute to the Mg(2+) site. K192 carries the N6-carboxylysine modification. The active-site Proton acceptor is the H285. R286, H318, and S370 together coordinate substrate.

Belongs to the RuBisCO large chain family. Type I subfamily. In terms of assembly, heterohexadecamer of 8 large chains and 8 small chains; disulfide-linked. The disulfide link is formed within the large subunit homodimers. The cofactor is Mg(2+). In terms of processing, the disulfide bond which can form in the large chain dimeric partners within the hexadecamer appears to be associated with oxidative stress and protein turnover.

It localises to the plastid. The protein localises to the chloroplast. It carries out the reaction 2 (2R)-3-phosphoglycerate + 2 H(+) = D-ribulose 1,5-bisphosphate + CO2 + H2O. The enzyme catalyses D-ribulose 1,5-bisphosphate + O2 = 2-phosphoglycolate + (2R)-3-phosphoglycerate + 2 H(+). RuBisCO catalyzes two reactions: the carboxylation of D-ribulose 1,5-bisphosphate, the primary event in carbon dioxide fixation, as well as the oxidative fragmentation of the pentose substrate in the photorespiration process. Both reactions occur simultaneously and in competition at the same active site. This chain is Ribulose bisphosphate carboxylase large chain, found in Lupinus cosentinii (West Australian blue lupine).